Consider the following 303-residue polypeptide: ATP synthase gamma chain (303 aa).

It belongs to the ATPase gamma chain family. F-type ATPases have 2 components, CF(1) - the catalytic core - and CF(0) - the membrane proton channel. CF(1) has five subunits: alpha(3), beta(3), gamma(1), delta(1), epsilon(1). CF(0) has three main subunits: a, b and c.

It localises to the cell membrane. Functionally, produces ATP from ADP in the presence of a proton gradient across the membrane. The gamma chain is believed to be important in regulating ATPase activity and the flow of protons through the CF(0) complex. The polypeptide is ATP synthase gamma chain (Nocardioides sp. (strain ATCC BAA-499 / JS614)).